A 72-amino-acid chain; its full sequence is UPF0270 protein YheU (72 aa).

It belongs to the UPF0270 family.

In Escherichia fergusonii (strain ATCC 35469 / DSM 13698 / CCUG 18766 / IAM 14443 / JCM 21226 / LMG 7866 / NBRC 102419 / NCTC 12128 / CDC 0568-73), this protein is UPF0270 protein YheU.